Consider the following 57-residue polypeptide: Potassium channel toxin alpha-KTx 23.3 (57 aa).

The N-terminal stretch at 1-23 is a signal peptide; sequence MKMSIVIILLLFTCLIATNGASG. Intrachain disulfides connect C26–C46, C32–C51, C36–C53, and C41–C56.

It belongs to the short scorpion toxin superfamily. Potassium channel inhibitor family. Alpha-KTx 23 subfamily. In terms of tissue distribution, expressed by the venom gland.

Its subcellular location is the secreted. In terms of biological role, this toxin shows both immunosuppressive and anti-inflammatory activities. It has the potential to inhibit human T cell activation, since it reduces IL-2 secretion and the expression of T cell activation marker CD69 and acts as an anti-inflammatory agent, since it provokes the reduction of secretion of both IFN-gamma and TNF-alpha. In vivo, the delayed-type hypersensitivity response in rat autoimmune disease model is ameliorated in the presence of this toxin. Acts by blocking Kv1.3/KCNA3 potassium channels of T-lymphocytes. The sequence is that of Potassium channel toxin alpha-KTx 23.3 from Scorpiops tibetanus (Scorpion).